The chain runs to 329 residues: N-acetylmuramoyl-L-alanine amidase sle1 (329 aa).

Positions 1 to 26 (MNKKILATAVLGTGALSTLFAHQAEA) are cleaved as a signal peptide. LysM domains follow at residues 28 to 71 (TTHT…VLKV), 88 to 131 (STYT…QLKV), and 152 to 195 (STYT…KLRV). The Peptidase C51 domain maps to 205 to 329 (STRSAQSTYY…YQVRNYKFIH (125 aa)).

Its subcellular location is the secreted. It localises to the cell surface. The catalysed reaction is Hydrolyzes the link between N-acetylmuramoyl residues and L-amino acid residues in certain cell-wall glycopeptides.. Functionally, peptidoglycan hydrolase involved in the splitting of the septum during cell division. The protein is N-acetylmuramoyl-L-alanine amidase sle1 (sle1) of Staphylococcus haemolyticus (strain JCSC1435).